Reading from the N-terminus, the 118-residue chain is MRESIQRRKNRLRIKRKRRVRGKITGSADRPRVSIFKSNRHFYAQAIDDTKGHTLAYSDGAKLGVKVNKEDVKKVAEDLAGKLKALNIETIVFDRNGYLYHGVVASFADALRENGIKF.

The protein belongs to the universal ribosomal protein uL18 family. Part of the 50S ribosomal subunit; part of the 5S rRNA/L5/L18/L25 subcomplex. Contacts the 5S and 23S rRNAs.

Its function is as follows. This is one of the proteins that bind and probably mediate the attachment of the 5S RNA into the large ribosomal subunit, where it forms part of the central protuberance. The sequence is that of Large ribosomal subunit protein uL18 from Nitratiruptor sp. (strain SB155-2).